A 589-amino-acid polypeptide reads, in one-letter code: DNA mismatch repair protein MutL (589 aa).

Disordered regions lie at residues leucine 330 to glutamate 355 and arginine 374 to threonine 394. Residues glutamine 331 to proline 341 show a composition bias toward basic and acidic residues. Pro residues predominate over residues proline 381 to alanine 390.

The protein belongs to the DNA mismatch repair MutL/HexB family.

Its function is as follows. This protein is involved in the repair of mismatches in DNA. It is required for dam-dependent methyl-directed DNA mismatch repair. May act as a 'molecular matchmaker', a protein that promotes the formation of a stable complex between two or more DNA-binding proteins in an ATP-dependent manner without itself being part of a final effector complex. The sequence is that of DNA mismatch repair protein MutL from Trichlorobacter lovleyi (strain ATCC BAA-1151 / DSM 17278 / SZ) (Geobacter lovleyi).